Consider the following 445-residue polypeptide: Exodeoxyribonuclease 7 large subunit (445 aa).

The protein belongs to the XseA family. Heterooligomer composed of large and small subunits.

It localises to the cytoplasm. It catalyses the reaction Exonucleolytic cleavage in either 5'- to 3'- or 3'- to 5'-direction to yield nucleoside 5'-phosphates.. Bidirectionally degrades single-stranded DNA into large acid-insoluble oligonucleotides, which are then degraded further into small acid-soluble oligonucleotides. This chain is Exodeoxyribonuclease 7 large subunit, found in Delftia acidovorans (strain DSM 14801 / SPH-1).